A 308-amino-acid polypeptide reads, in one-letter code: Cyclin-D2-1 (308 aa).

The interval 286–308 (EGLSYDSSSPPPPKRRKRSPPGT) is disordered. Residues 298–308 (PKRRKRSPPGT) are compositionally biased toward basic residues.

It belongs to the cyclin family. Cyclin D subfamily.

The chain is Cyclin-D2-1 (CYCD2-1) from Oryza sativa subsp. japonica (Rice).